Consider the following 533-residue polypeptide: MKERERVLELVKKGILTSEEALILLENMATEKDEKQIEKAAEKVDTQNIGTTNKEDQVADLMNALEKGESEGPTVDSFEENTQDSAEKDRENLERILDELATKANRASAELDEVNAEIAGIKEEIKEVAEEIGTLDTKEELDALTEDEQVQRKDLHVLLAQLEEKLATQSTEKTALEEELKNIRKEQWKGQWNDTKEKVSSQFSEEWKDQATDTFNQVGGKVAEVGGQVGEFLKKTFNSFSDTMNDNVEWKDIKMKVPGVATTKFEHEFNYPNPQASLIDVKVANGTVVFKTWDQEDVKVEAKIKLYGKMAGDSPMEAFLERSDIDVDDETISFQVPNKRVKADLTFYLPKRTYDHVSVKLLNGNVLVEELTAKDVYTKSTNGTITFKKIDATMLEIEGVNGEIKVLEGTILDNIIETVNGDVSISAAPESLSVSLINGDIRITAKEKTLRRVEASSANGNIKLALPNDLGVEGQVKTNLGSINSRLTDIEVVREKKDRGNQQLHFRRVLEESMAQINASTTTGSIFLKDTDK.

The tract at residues 1-277 (MKERERVLEL…EFNYPNPQAS (277 aa)) is binds the antibiotic daptomycin (DAP) and the antimicrobial peptide human LL-37, under physiologically relevant concentrations. Protects the OG1RF and S613 strains from LL-37-mediated killing in a concentration-dependent manner. The tract at residues 63-89 (NALEKGESEGPTVDSFEENTQDSAEKD) is disordered. Positions 83–186 (QDSAEKDREN…EEELKNIRKE (104 aa)) form a coiled coil. Residues 279-526 (IDVKVANGTV…INASTTTGSI (248 aa)) form a putative adhesin region region. The segment at 289–526 (VFKTWDQEDV…INASTTTGSI (238 aa)) is involved in cell membrane remodeling.

In terms of processing, may undergo proteolytic cleavage, allowing release of the N-terminal region into the extracellular environment.

The protein resides in the secreted. It is found in the cell wall. The protein localises to the cell membrane. Functionally, involved in cell membrane remodeling, perhaps acting by negative modulation of the liaFSR and liaXYZ gene clusters, thereby regulating content and localization of anionic phospholipids. Binds to the antibiotic daptomycin (DAP) and to cationic antimicrobial peptides, such as human LL-37, perhaps functioning as a sensor that activates the cell envelope stress response. In Enterococcus faecalis (strain ATCC 700802 / V583), this protein is Putative adhesin domain-containing protein LiaX.